Consider the following 270-residue polypeptide: Splicing factor YJU2 (270 aa).

The segment at 1 to 32 is disordered; that stretch reads MSERKVLNKYIPPDYDPSIRPPKKKKKFQGPN. Positions 48, 51, 84, and 87 each coordinate Zn(2+). The segment at 251-270 is disordered; the sequence is PNFQPPKYAKRKMEKKKVLV. The span at 258–270 shows a compositional bias: basic residues; it reads YAKRKMEKKKVLV.

The protein belongs to the CWC16 family. YJU2 subfamily. Component of the spliceosome. Present in the activated B complex, the catalytically activated B* complex which catalyzes the branching, the catalytic step 1 C complex catalyzing the exon ligation, and the postcatalytic P complex containing the ligated exons (mRNA) and the excised lariat intron. Belongs to the 40S cdc5-associated complex (or cwf complex), a spliceosome sub-complex reminiscent of a late-stage spliceosome composed of the U2, U5 and U6 snRNAs and at least brr2, cdc5, cwf2/prp3, cwf3/syf1, cwf4/syf3, cwf5/ecm2, spp42/cwf6, cwf7/spf27, cwf8, cwf9, cwf10, cwf11, cwf12, prp45/cwf13, cwf14, cwf15, cwf16, cwf17, cwf18, cwf19, cwf20, cwf21, cwf22, cwf23, cwf24, cwf25, cwf26, cyp7/cwf27, cwf28, cwf29/ist3, lea1, msl1, prp5/cwf1, prp10, prp12/sap130, prp17, prp22, sap61, sap62, sap114, sap145, slu7, smb1, smd1, smd3, smf1, smg1 and syf2.

The protein resides in the nucleus. Part of the spliceosome which catalyzes two sequential transesterification reactions, first the excision of the non-coding intron from pre-mRNA and then the ligation of the coding exons to form the mature mRNA. Plays a role in stabilizing the structure of the spliceosome catalytic core and docking of the branch helix into the active site, producing 5'-exon and lariat intron-3'-intermediates. The sequence is that of Splicing factor YJU2 (cwf16) from Schizosaccharomyces pombe (strain 972 / ATCC 24843) (Fission yeast).